We begin with the raw amino-acid sequence, 328 residues long: Olfactory receptor 13A1 (328 aa).

Residues 1-43 (MKLWMESHLIVPETRPSPRMMSNQTLVTEFILQGFSEHPEYRV) are Extracellular-facing. Asn-23 is a glycosylation site (N-linked (GlcNAc...) asparagine). A helical transmembrane segment spans residues 44 to 64 (FLFSCFLFLYSGALTGNVLIT). At 65-72 (LAITFNPG) the chain is on the cytoplasmic side. The chain crosses the membrane as a helical span at residues 73–93 (LHAPMYFFLLNLATMDIICTS). The Extracellular segment spans residues 94–117 (SIMPKALASLVSEESSISYGGCMA). An intrachain disulfide couples Cys-115 to Cys-207. The chain crosses the membrane as a helical span at residues 118-138 (QLYFLTWAASSELLLLTVMAY). Residues 139-157 (DRYAAICHPLHYSSMMSKV) lie on the Cytoplasmic side of the membrane. Residues 158-178 (FCSGLATAVWLLCAVNTAIHT) form a helical membrane-spanning segment. Residues 179-215 (GLMLRLDFCGPNVIIHFFCEVPPLLLLSCSSTYVNGV) lie on the Extracellular side of the membrane. Residues 216-235 (MIVLADAFYGIVNFLMTIAS) traverse the membrane as a helical segment. Residues 236-255 (YGFIVSSILKVKTAWGRQKA) are Cytoplasmic-facing. A helical membrane pass occupies residues 256-276 (FSTCSSHLTVVCMYYTAVFYA). The Extracellular segment spans residues 277–289 (YISPVSGYSAGKS). Residues 290-310 (KLAGLLYTVLSPTLNPLIYTL) form a helical membrane-spanning segment. Residues 311–328 (RNKEVKAALRKLFPFFRN) are Cytoplasmic-facing.

This sequence belongs to the G-protein coupled receptor 1 family.

It is found in the cell membrane. In terms of biological role, odorant receptor. This chain is Olfactory receptor 13A1 (OR13A1), found in Homo sapiens (Human).